The chain runs to 778 residues: MSFVIAVPEALTMAASDLANIGSTINAANAAAALPTTGVVAAAADEVSAAVAALFGSYAQSYQAFGAQLSAFHAQFVQSLTNGARSYVVAEATSAAPLQDLLGVVNAPAQALLGRPLIGNGANGADGTGAPGGPGGLLLGNGGNGGSGAPGQPGGAGGDAGLIGNGGTGGKGGDGLVGSGAAGGVGGRGGWLLGNGGTGGAGGAAGATLVGGTGGVGGATGLIGSGGFGGAGGAAAGVGTTGGVGGSGGVGGVFGNGGFGGAGGLGAAGGVGGAASYFGTGGGGGVGGDGAPGGDGGAGPLLIGNGGVGGLGGAGAAGGNGGAGGMLLGDGGAGGQGGPAVAGVLGGMPGAGGNGGNANWFGSGGAGGQGGTGLAGTNGVNPGSIANPNTGANGTDNSGNGNQTGGNGGPGPAGGVGEAGGVGGQGGLGESLDGNDGTGGKGGAGGTAGTDGGAGGAGGAGGIGETDGSAGGVATGGEGGDGATGGVDGGVGGAGGKGGQGHNTGVGDAFGGDGGIGGDGNGALGAAGGNGGTGGAGGNGGRGGMLIGNGGAGGAGGTGGTGGGGAAGFAGGVGGAGGEGLTDGAGTAEGGTGGLGGLGGVGGTGGMGGSGGVGGNGGAAGSLIGLGGGGGAGGVGGTGGIGGIGGAGGNGGAGGAGTTTGGGATIGGGGGTGGVGGAGGTGGTGGAGGTTGGSGGAGGLIGWAGAAGGTGAGGTGGQGGLGGQGGNGGNGGTGATGGQGGDFALGGNGGAGGAGGSPGGSSGIQGNMGPPGTQGADG.

Residues 1 to 92 enclose the PE domain; that stretch reads MSFVIAVPEA…GARSYVVAEA (92 aa). Disordered stretches follow at residues 125–163, 372–510, and 718–778; these read ADGT…AGLI, TGLA…GDAF, and QGGL…GADG. Composition is skewed to gly residues over residues 402–429, 436–510, and 718–763; these read NQTG…GGLG, DGTG…GDAF, and QGGL…GSSG.

It belongs to the mycobacterial PE family. PGRS subfamily.

This is an uncharacterized protein from Mycobacterium bovis (strain ATCC BAA-935 / AF2122/97).